A 202-amino-acid chain; its full sequence is LexA repressor 2 (202 aa).

A DNA-binding region (H-T-H motif) is located at residues leucine 28–valine 48. Active-site for autocatalytic cleavage activity residues include serine 123 and lysine 160.

This sequence belongs to the peptidase S24 family. In terms of assembly, homodimer.

The catalysed reaction is Hydrolysis of Ala-|-Gly bond in repressor LexA.. Functionally, represses a number of genes involved in the response to DNA damage (SOS response), including recA and lexA. In the presence of single-stranded DNA, RecA interacts with LexA causing an autocatalytic cleavage which disrupts the DNA-binding part of LexA, leading to derepression of the SOS regulon and eventually DNA repair. This chain is LexA repressor 2, found in Pseudomonas syringae pv. tomato (strain ATCC BAA-871 / DC3000).